The primary structure comprises 366 residues: ABI gene family member 3 (366 aa).

Positions 33-61 (CEDNYVQATDKRKALEETMAFTTQALASV) form a coiled coil. A disordered region spans residues 161–195 (SRTGTLSRKSIKAPATPASATLGRPPRIPEPVHLP). A phosphoserine mark is found at S213 and S216. The tract at residues 215 to 302 (GSAEGVGGAP…PPPGFGPDEP (88 aa)) is disordered. The span at 232–248 (PPAPPLPSSLDPPPPPA) shows a compositional bias: pro residues. Residues 308–366 (SYLEKVVTLYPYTSQKDNELSFSEGTVICVTRRYSDGWCEGVSSEGTGFFPGNYVEPSC) form the SH3 domain. Phosphoserine is present on S342.

The protein belongs to the ABI family. In terms of assembly, may interact with PAK1 and PAK2. Probably interacts with TARSH. As to expression, expressed in heart, lung, liver, pancreas, kidney, placenta and at low levels in brain and skeletal muscle.

The protein resides in the cytoplasm. May inhibit tumor metastasis. In vitro, reduces cell motility. This chain is ABI gene family member 3 (ABI3), found in Homo sapiens (Human).